We begin with the raw amino-acid sequence, 341 residues long: Tetraacyldisaccharide 4'-kinase (341 aa).

T57–T64 serves as a coordination point for ATP.

This sequence belongs to the LpxK family.

It catalyses the reaction a lipid A disaccharide + ATP = a lipid IVA + ADP + H(+). Its pathway is glycolipid biosynthesis; lipid IV(A) biosynthesis; lipid IV(A) from (3R)-3-hydroxytetradecanoyl-[acyl-carrier-protein] and UDP-N-acetyl-alpha-D-glucosamine: step 6/6. In terms of biological role, transfers the gamma-phosphate of ATP to the 4'-position of a tetraacyldisaccharide 1-phosphate intermediate (termed DS-1-P) to form tetraacyldisaccharide 1,4'-bis-phosphate (lipid IVA). The polypeptide is Tetraacyldisaccharide 4'-kinase (Maricaulis maris (strain MCS10) (Caulobacter maris)).